Here is a 201-residue protein sequence, read N- to C-terminus: 3-isopropylmalate dehydratase small subunit (201 aa).

Belongs to the LeuD family. LeuD type 1 subfamily. In terms of assembly, heterodimer of LeuC and LeuD.

It carries out the reaction (2R,3S)-3-isopropylmalate = (2S)-2-isopropylmalate. It functions in the pathway amino-acid biosynthesis; L-leucine biosynthesis; L-leucine from 3-methyl-2-oxobutanoate: step 2/4. Its function is as follows. Catalyzes the isomerization between 2-isopropylmalate and 3-isopropylmalate, via the formation of 2-isopropylmaleate. In Agrobacterium fabrum (strain C58 / ATCC 33970) (Agrobacterium tumefaciens (strain C58)), this protein is 3-isopropylmalate dehydratase small subunit.